Reading from the N-terminus, the 559-residue chain is (-)-drimenol synthase (559 aa).

Mg(2+)-binding residues include Asp311, Asp315, Asp456, Ser460, and Glu464. The DDXXD motif signature appears at 311–315 (DDIYD).

The protein belongs to the terpene synthase family. It depends on Mg(2+) as a cofactor.

The catalysed reaction is (2E,6E)-farnesyl diphosphate + H2O = (5S,9S,10S)-drim-7-en-11-ol + diphosphate. It participates in secondary metabolite biosynthesis; terpenoid biosynthesis. Its function is as follows. Catalyzes the conversion of (2E,6E)-farnesyl diphosphate (FPP) into drimenol, a precursor of the sesquiterpenoid polygodial. Polygodial has been shown to be an antifeedant for a number of herbivorous insects. The chain is (-)-drimenol synthase from Persicaria hydropiper (Marshpepper knotweed).